The sequence spans 686 residues: Solute carrier family 22 member 23 (686 aa).

Disordered regions lie at residues 1–62 (MAID…GGGP) and 169–193 (GNRS…DKGD). Asn-24 carries N-linked (GlcNAc...) asparagine glycosylation. A run of 2 helical transmembrane segments spans residues 234-254 (FSLL…ADWV) and 258-278 (PVLL…ALSV). The N-linked (GlcNAc...) asparagine glycan is linked to Asn-279. 8 helical membrane passes run 288-308 (FFEG…RIEL), 315-335 (FMIT…MPGL), 344-364 (VLQA…SIFP), 467-487 (ADYY…CVVV), 494-514 (GGLL…LGLL), 538-558 (IAFS…SVFF), 569-589 (CGGL…APII), and 598-618 (FLHH…ILLL).

Belongs to the major facilitator (TC 2.A.1) superfamily. Organic cation transporter (TC 2.A.1.19) family.

The protein resides in the membrane. This Homo sapiens (Human) protein is Solute carrier family 22 member 23 (SLC22A23).